The sequence spans 132 residues: L-ectoine synthase (132 aa).

Belongs to the ectoine synthase family.

The enzyme catalyses (2S)-4-acetamido-2-aminobutanoate = L-ectoine + H2O. The protein operates within amine and polyamine biosynthesis; ectoine biosynthesis; L-ectoine from L-aspartate 4-semialdehyde: step 3/3. Functionally, catalyzes the circularization of gamma-N-acetyl-alpha,gamma-diaminobutyric acid (ADABA) to ectoine (1,4,5,6-tetrahydro-2-methyl-4-pyrimidine carboxylic acid), which is an excellent osmoprotectant. The sequence is that of L-ectoine synthase from Hahella chejuensis (strain KCTC 2396).